The following is a 538-amino-acid chain: RNA-binding protein Ro60 (538 aa).

Position 1 is an N-acetylmethionine (Met-1). Phosphoserine is present on residues Ser-4 and Ser-19. The TROVE domain maps to 16 to 369; sequence VVNSEGGCVW…TFKTVEPTGK (354 aa). The interval 120-284 is RNA-binding; sequence RIPTHLFTFI…EMPLTALLRN (165 aa). Lys-224 carries the post-translational modification N6-acetyllysine. The segment at 361–538 is VWFA-like domain; it reads FKTVEPTGKR…VIRNFTLDVI (178 aa). The a divalent metal cation site is built by Ser-378, Ser-380, and Thr-445.

The protein belongs to the Ro 60 kDa family. In terms of assembly, identified in a IGF2BP1-dependent mRNP granule complex containing untranslated mRNAs. Found in a complex with PUF60 and Y5 RNA. Interacts with RAB11FIP5. In terms of tissue distribution, highest in brain, followed by lung, muscle, kidney and heart. Lower levels are found in testis, liver and spleen.

The protein localises to the cytoplasm. Its function is as follows. RNA-binding protein that binds to misfolded non-coding RNAs, pre-5S rRNA, and several small cytoplasmic RNA molecules known as Y RNAs. May play roles in cilia formation and/or maintenance. In Mus musculus (Mouse), this protein is RNA-binding protein Ro60.